Reading from the N-terminus, the 256-residue chain is Small ribosomal subunit protein uS2 (256 aa).

The protein belongs to the universal ribosomal protein uS2 family.

The protein is Small ribosomal subunit protein uS2 of Brucella melitensis biotype 1 (strain ATCC 23456 / CCUG 17765 / NCTC 10094 / 16M).